The chain runs to 484 residues: Glutamyl-tRNA(Gln) amidotransferase subunit A (484 aa).

Residues Lys76 and Ser151 each act as charge relay system in the active site. Ser175 functions as the Acyl-ester intermediate in the catalytic mechanism.

Belongs to the amidase family. GatA subfamily. Heterotrimer of A, B and C subunits.

It catalyses the reaction L-glutamyl-tRNA(Gln) + L-glutamine + ATP + H2O = L-glutaminyl-tRNA(Gln) + L-glutamate + ADP + phosphate + H(+). Its function is as follows. Allows the formation of correctly charged Gln-tRNA(Gln) through the transamidation of misacylated Glu-tRNA(Gln) in organisms which lack glutaminyl-tRNA synthetase. The reaction takes place in the presence of glutamine and ATP through an activated gamma-phospho-Glu-tRNA(Gln). In Cellvibrio japonicus (strain Ueda107) (Pseudomonas fluorescens subsp. cellulosa), this protein is Glutamyl-tRNA(Gln) amidotransferase subunit A.